Reading from the N-terminus, the 211-residue chain is Endonuclease Htp3 (211 aa).

The N-terminal stretch at 1–20 is a signal peptide; that stretch reads MLEVPVWIPILAFAVGLGLG. A RxLR motif is present at residues 48–51; it reads RTLR. In terms of domain architecture, TNase-like spans 48–198; the sequence is RTLRGKVVSV…REKRVNIWSL (151 aa). A Ca(2+)-binding site is contributed by aspartate 77. Arginine 90 is an active-site residue. A Ca(2+)-binding site is contributed by aspartate 95. Active-site residues include glutamate 98 and arginine 138. Residue asparagine 153 is glycosylated (N-linked (GlcNAc...) asparagine). The tract at residues 200–211 is binding to the host cell surface; the sequence is KRETPAQYKARK.

The protein in the N-terminal section; belongs to the RxLR effector family. In the C-terminal section; belongs to the LCL3 family. As to quaternary structure, interacts with the host cell surface endoplasmin gp96, in order to get translocated into to host cell. Interacts with the effector Htp1, in order to get released from vesicles into the host cytosol.

The protein resides in the secreted. It is found in the host cytoplasm. The protein localises to the host cytosol. With respect to regulation, the nuclease activity shows a general salt dependency with a clear reduction by magnesium and sulfate ions. Effector involved in the disease saprolegniosis in salmonids and other freshwater fish, resulting in considerable economic losses in aquaculture. Within the host fish cells, Htp3 is released from vesicles into host cytosol where it degrades nucleic acids. The chain is Endonuclease Htp3 (HTP3) from Saprolegnia parasitica (strain CBS 223.65).